Consider the following 70-residue polypeptide: DNA gyrase inhibitor YacG (70 aa).

Cysteine 20, cysteine 23, cysteine 35, and cysteine 39 together coordinate Zn(2+).

Belongs to the DNA gyrase inhibitor YacG family. In terms of assembly, interacts with GyrB. Requires Zn(2+) as cofactor.

Its function is as follows. Inhibits all the catalytic activities of DNA gyrase by preventing its interaction with DNA. Acts by binding directly to the C-terminal domain of GyrB, which probably disrupts DNA binding by the gyrase. The protein is DNA gyrase inhibitor YacG of Rhizobium leguminosarum bv. trifolii (strain WSM2304).